We begin with the raw amino-acid sequence, 804 residues long: Lon protease 2 (804 aa).

A Lon N-terminal domain is found at 19–216; sequence VPILPLRNSV…LVLAMVGRQL (198 aa). 367-374 lines the ATP pocket; the sequence is GPPGVGKT. The Lon proteolytic domain maps to 603–784; sequence TLQPGVATGL…EEILPLVLEP (182 aa). Active-site residues include Ser690 and Lys733. The disordered stretch occupies residues 782-804; the sequence is LEPPRRAPAQSASPEELEEQAGV.

The protein belongs to the peptidase S16 family. In terms of assembly, homohexamer. Organized in a ring with a central cavity.

It localises to the cytoplasm. The catalysed reaction is Hydrolysis of proteins in presence of ATP.. ATP-dependent serine protease that mediates the selective degradation of mutant and abnormal proteins as well as certain short-lived regulatory proteins. Required for cellular homeostasis and for survival from DNA damage and developmental changes induced by stress. Degrades polypeptides processively to yield small peptide fragments that are 5 to 10 amino acids long. Binds to DNA in a double-stranded, site-specific manner. This Sorangium cellulosum (strain So ce56) (Polyangium cellulosum (strain So ce56)) protein is Lon protease 2.